Consider the following 284-residue polypeptide: Bifunctional protein FolD (284 aa).

NADP(+) is bound by residues 164–166 (GRS) and Ser189.

Belongs to the tetrahydrofolate dehydrogenase/cyclohydrolase family. As to quaternary structure, homodimer.

It carries out the reaction (6R)-5,10-methylene-5,6,7,8-tetrahydrofolate + NADP(+) = (6R)-5,10-methenyltetrahydrofolate + NADPH. The enzyme catalyses (6R)-5,10-methenyltetrahydrofolate + H2O = (6R)-10-formyltetrahydrofolate + H(+). The protein operates within one-carbon metabolism; tetrahydrofolate interconversion. Catalyzes the oxidation of 5,10-methylenetetrahydrofolate to 5,10-methenyltetrahydrofolate and then the hydrolysis of 5,10-methenyltetrahydrofolate to 10-formyltetrahydrofolate. In Listeria monocytogenes serovar 1/2a (strain ATCC BAA-679 / EGD-e), this protein is Bifunctional protein FolD.